The primary structure comprises 361 residues: Biotin synthase (361 aa).

Positions 14 to 38 (AQRTPEPLPPTSQGLARPSHDVVRG) are disordered. The Radical SAM core domain maps to 86-315 (HKGGPAALCG…ARDILVCGGR (230 aa)). 3 residues coordinate [4Fe-4S] cluster: Cys104, Cys108, and Cys111. Positions 180 and 240 each coordinate [2Fe-2S] cluster.

It belongs to the radical SAM superfamily. Biotin synthase family. Homodimer. [4Fe-4S] cluster is required as a cofactor. Requires [2Fe-2S] cluster as cofactor.

The enzyme catalyses (4R,5S)-dethiobiotin + (sulfur carrier)-SH + 2 reduced [2Fe-2S]-[ferredoxin] + 2 S-adenosyl-L-methionine = (sulfur carrier)-H + biotin + 2 5'-deoxyadenosine + 2 L-methionine + 2 oxidized [2Fe-2S]-[ferredoxin]. Its pathway is cofactor biosynthesis; biotin biosynthesis; biotin from 7,8-diaminononanoate: step 2/2. Its function is as follows. Catalyzes the conversion of dethiobiotin (DTB) to biotin by the insertion of a sulfur atom into dethiobiotin via a radical-based mechanism. The sequence is that of Biotin synthase from Nitratidesulfovibrio vulgaris (strain DP4) (Desulfovibrio vulgaris).